The following is a 293-amino-acid chain: MALSLSLFLGGRVRTSLARCGFASQVMAGPGSVSCEPDPDSDWEPEERELQEVESALKRQKKAMRFQKIRRQMEAPGAPPRTLTWEAMEQIRYLHKEFAESWSVPRLAEGFDVSTDVIRRVLKSKFVPTLEQKLRQDQKVLKKAGFTREIGQLPVSEDTLKALSAGRSVSGLLMAGDEVSSKSQNHSTALKVAKSHPHSTDAQKKREGRDKRIQVLEESLVPATTALGHQRELQKSATSDSEATGRAGSDTLPSAVLLEELKPGEPGDQSFSSKVVQRGHDFFDSNGNFLYRI.

Positions 1-18 (MALSLSLFLGGRVRTSLA) are cleaved as a signal peptide. A Phosphoserine modification is found at Ser41. Disordered stretches follow at residues 177-210 (DEVS…EGRD) and 224-254 (TTAL…TLPS). Asn185 is a glycosylation site (N-linked (GlcNAc...) asparagine). The segment covering 198 to 210 (HSTDAQKKREGRD) has biased composition (basic and acidic residues).

Belongs to the neugrin family. In terms of assembly, forms a regulatory protein-RNA complex, consisting of RCC1L, NGRN, RPUSD3, RPUSD4, TRUB2, FASTKD2 and 16S mt-rRNA. Interacts with 16S mt-rRNA; this interaction is direct. Expressed in heart, brain, liver and kidney. In brain, mainly expressed in neurons rather than glial cells.

The protein resides in the nucleus. The protein localises to the secreted. It is found in the mitochondrion membrane. Its function is as follows. Plays an essential role in mitochondrial ribosome biogenesis. As a component of a functional protein-RNA module, consisting of RCC1L, NGRN, RPUSD3, RPUSD4, TRUB2, FASTKD2 and 16S mitochondrial ribosomal RNA (16S mt-rRNA), controls 16S mt-rRNA abundance and is required for intra-mitochondrial translation of core subunits of the oxidative phosphorylation system. The sequence is that of Neugrin (Ngrn) from Mus musculus (Mouse).